The chain runs to 249 residues: Glucosamine-6-phosphate deaminase (249 aa).

The active-site Proton acceptor; for enolization step is Asp67. Asn136 (for ring-opening step) is an active-site residue. The active-site Proton acceptor; for ring-opening step is His138. Glu143 acts as the For ring-opening step in catalysis.

Belongs to the glucosamine/galactosamine-6-phosphate isomerase family. NagB subfamily.

The enzyme catalyses alpha-D-glucosamine 6-phosphate + H2O = beta-D-fructose 6-phosphate + NH4(+). The protein operates within amino-sugar metabolism; N-acetylneuraminate degradation; D-fructose 6-phosphate from N-acetylneuraminate: step 5/5. Functionally, catalyzes the reversible isomerization-deamination of glucosamine 6-phosphate (GlcN6P) to form fructose 6-phosphate (Fru6P) and ammonium ion. The polypeptide is Glucosamine-6-phosphate deaminase (Clostridium botulinum (strain Eklund 17B / Type B)).